The sequence spans 239 residues: Pyridoxine 5'-phosphate synthase (239 aa).

Asparagine 7 is a 3-amino-2-oxopropyl phosphate binding site. 1-deoxy-D-xylulose 5-phosphate is bound at residue 9–10; the sequence is DH. Arginine 18 contacts 3-amino-2-oxopropyl phosphate. Histidine 43 serves as the catalytic Proton acceptor. Residues arginine 45 and histidine 50 each coordinate 1-deoxy-D-xylulose 5-phosphate. Catalysis depends on glutamate 70, which acts as the Proton acceptor. 1-deoxy-D-xylulose 5-phosphate is bound at residue threonine 100. Catalysis depends on histidine 191, which acts as the Proton donor. Residues glycine 192 and 213 to 214 contribute to the 3-amino-2-oxopropyl phosphate site; that span reads GH.

The protein belongs to the PNP synthase family. Homooctamer; tetramer of dimers.

The protein localises to the cytoplasm. The catalysed reaction is 3-amino-2-oxopropyl phosphate + 1-deoxy-D-xylulose 5-phosphate = pyridoxine 5'-phosphate + phosphate + 2 H2O + H(+). Its pathway is cofactor biosynthesis; pyridoxine 5'-phosphate biosynthesis; pyridoxine 5'-phosphate from D-erythrose 4-phosphate: step 5/5. Functionally, catalyzes the complicated ring closure reaction between the two acyclic compounds 1-deoxy-D-xylulose-5-phosphate (DXP) and 3-amino-2-oxopropyl phosphate (1-amino-acetone-3-phosphate or AAP) to form pyridoxine 5'-phosphate (PNP) and inorganic phosphate. The polypeptide is Pyridoxine 5'-phosphate synthase (Synechococcus sp. (strain JA-2-3B'a(2-13)) (Cyanobacteria bacterium Yellowstone B-Prime)).